The sequence spans 224 residues: Thiamine-phosphate synthase (224 aa).

4-amino-2-methyl-5-(diphosphooxymethyl)pyrimidine-binding positions include 44 to 48 (QFREK) and asparagine 79. Positions 80 and 99 each coordinate Mg(2+). 4-amino-2-methyl-5-(diphosphooxymethyl)pyrimidine is bound at residue serine 117. Residue 143 to 145 (TET) coordinates 2-[(2R,5Z)-2-carboxy-4-methylthiazol-5(2H)-ylidene]ethyl phosphate. Lysine 146 contacts 4-amino-2-methyl-5-(diphosphooxymethyl)pyrimidine. Residues glycine 175 and 195-196 (IS) contribute to the 2-[(2R,5Z)-2-carboxy-4-methylthiazol-5(2H)-ylidene]ethyl phosphate site.

Belongs to the thiamine-phosphate synthase family. Mg(2+) serves as cofactor.

It carries out the reaction 2-[(2R,5Z)-2-carboxy-4-methylthiazol-5(2H)-ylidene]ethyl phosphate + 4-amino-2-methyl-5-(diphosphooxymethyl)pyrimidine + 2 H(+) = thiamine phosphate + CO2 + diphosphate. The enzyme catalyses 2-(2-carboxy-4-methylthiazol-5-yl)ethyl phosphate + 4-amino-2-methyl-5-(diphosphooxymethyl)pyrimidine + 2 H(+) = thiamine phosphate + CO2 + diphosphate. It catalyses the reaction 4-methyl-5-(2-phosphooxyethyl)-thiazole + 4-amino-2-methyl-5-(diphosphooxymethyl)pyrimidine + H(+) = thiamine phosphate + diphosphate. Its pathway is cofactor biosynthesis; thiamine diphosphate biosynthesis; thiamine phosphate from 4-amino-2-methyl-5-diphosphomethylpyrimidine and 4-methyl-5-(2-phosphoethyl)-thiazole: step 1/1. Functionally, condenses 4-methyl-5-(beta-hydroxyethyl)thiazole monophosphate (THZ-P) and 2-methyl-4-amino-5-hydroxymethyl pyrimidine pyrophosphate (HMP-PP) to form thiamine monophosphate (TMP). The chain is Thiamine-phosphate synthase from Bacillus licheniformis (strain ATCC 14580 / DSM 13 / JCM 2505 / CCUG 7422 / NBRC 12200 / NCIMB 9375 / NCTC 10341 / NRRL NRS-1264 / Gibson 46).